The chain runs to 341 residues: Eukaryotic translation initiation factor 2 subunit 1 (341 aa).

The region spanning 16–87 is the S1 motif domain; that stretch reads EDVVMVNVLS…EKGYIDLSKR (72 aa). Ser51 carries the post-translational modification Phosphoserine. The segment at 293-341 is disordered; that stretch reads AENAQVAGDDDEEDGADQEGMQFDPEKEFNHKGSGAGRANEEDEEEEED. Over residues 300–309 the composition is skewed to acidic residues; sequence GDDDEEDGAD.

Belongs to the eIF-2-alpha family. Eukaryotic translation initiation factor 2 eIF2 is a heterotrimeric complex composed of an alpha, a beta and a gamma subunit. Post-translationally, phosphorylation of eIF-2-alpha impairs the recycling of eIF-2 between successive rounds of initiation and thus leads to inhibition of translation.

Its subcellular location is the cytoplasm. It is found in the cytosol. Functionally, eIF-2 functions in the early steps of protein synthesis by forming a ternary complex with GTP and initiator tRNA. This pre-initiation complex mediates ribosomal recognition of a start codon during the scanning process of the leader region. The protein is Eukaryotic translation initiation factor 2 subunit 1 of Drosophila melanogaster (Fruit fly).